The sequence spans 804 residues: Protein translocase subunit SecA (804 aa).

ATP contacts are provided by residues Gln87, 105 to 109, and Asp500; that span reads GEGKT.

It belongs to the SecA family. In terms of assembly, monomer and homodimer. Part of the essential Sec protein translocation apparatus which comprises SecA, SecYEG and auxiliary proteins SecDF-YajC and YidC.

The protein localises to the cell inner membrane. Its subcellular location is the cytoplasm. It carries out the reaction ATP + H2O + cellular proteinSide 1 = ADP + phosphate + cellular proteinSide 2.. Functionally, part of the Sec protein translocase complex. Interacts with the SecYEG preprotein conducting channel. Has a central role in coupling the hydrolysis of ATP to the transfer of proteins into and across the cell membrane, serving both as a receptor for the preprotein-SecB complex and as an ATP-driven molecular motor driving the stepwise translocation of polypeptide chains across the membrane. The polypeptide is Protein translocase subunit SecA (Neorickettsia sennetsu (strain ATCC VR-367 / Miyayama) (Ehrlichia sennetsu)).